Reading from the N-terminus, the 964-residue chain is MLTGRESLVRLIGRRRRSPLPAALALAVPPSRSLQDDAADAEREAAAGGSSSGGGDAAGAAGWVACPVCGESIRGTDYCVNTHLDICLTRGTKRKLTQSTLLDFSFSRKATDDYALNNLNTSDEAEHMEPTDGNVSSDGAFFSLNNDKVNSKGSANASSPGCLHGSPDISETCDTCLPPNVLLPYTENTANNGVVKKCLSHMPSTDATSSTIGLLSVTDSSNSVVVDTVIVGRRFHENIELQEGASITLLRDPQNAKDPDAIKVLYAGYECEQMLGYLPRELAKVLAPLLDRHYIECEGCVVGVPEQQLDHVPIQLKCQKYTDENETYDDLKHPQFLWENFICAVGNGNLLQPSSTRYQTNFSSMITDVMANHSHLFSDKEKSFLDSFQLLPDDGQRLFVRIYTRKGPWFRMSSISYREISDLGQAAMELKLAGYIDMISCMDDLSNYDLKEVIDVLSVPEMKEILKELQKNNVSCTRRHELLSTLLYLYRNGTCTILPKRILKWTGTCIRTSDVADELLWRVQRLFFLNGDQDLSFFLLVDLGLVRFPVYACTISHRVFQEISDLLQYEEAIQVAQVMDQSLDNSNMEMVTRCIELSENRLSTAPKEENATRAEPPPSFFSRFSASSVYSKILTLGVSVYERDRRYTDAIRVLKRLLSTVASDRKRGYWALRLSVDLEHMNRSNESLSIAEAGVIDPWVRAGSKIALQRRVVRLSKPPRRWKVPSYANAVTTNIKEVNIEGRPLNCETGAKNVFYGYDGELCGVEQLALQYYADEGGGWRGTHSEGGIWMTIFGLLMWDAIFSDVPDVFQTKFQTAPLDLETDEFYRSRKDLIESQLKKIQDGIAEEILISSWELHQGTSCRGVNWDRHSLTDLRAAVVCTGGHRLASLLRHLALDYRSWSSGMPDLLLWRFLDERGGGEAKLVEVKGPRDQLSEQQRAWILVLMDFGFDVEVCKVSPVSKRR.

Residues 31–56 (SRSLQDDAADAEREAAAGGSSSGGGD) form a disordered region. A UBZ4-type zinc finger spans residues 63–92 (WVACPVCGESIRGTDYCVNTHLDICLTRGT). The Zn(2+) site is built by Cys66, Cys69, His83, and Cys87. Residues Glu786, Asp907, Glu926, and Val927 each contribute to the Mn(2+) site. Positions 844 to 958 (GIAEEILISS…GFDVEVCKVS (115 aa)) constitute a VRR-NUC domain.

It belongs to the FAN1 family. Mn(2+) is required as a cofactor. Requires Mg(2+) as cofactor.

The enzyme catalyses Hydrolytically removes 5'-nucleotides successively from the 3'-hydroxy termini of 3'-hydroxy-terminated oligonucleotides.. Functionally, nuclease required for the repair of DNA interstrand cross-links (ICL). Acts as a 5'-3' exonuclease that anchors at a cut end of DNA and cleaves DNA successively at every third nucleotide, allowing to excise an ICL from one strand through flanking incisions. This Oryza sativa subsp. japonica (Rice) protein is Fanconi-associated nuclease 1 homolog.